The sequence spans 307 residues: Holliday junction branch migration complex subunit RuvB (307 aa).

A large ATPase domain (RuvB-L) region spans residues 1 to 167 (MKLQIKPPNN…FGMILNIDYY (167 aa)). ATP-binding positions include isoleucine 5, glycine 48, lysine 51, threonine 52, threonine 53, 114–116 (DDF), arginine 157, tyrosine 167, and arginine 204. Position 52 (threonine 52) interacts with Mg(2+). Positions 168–233 (SNQEIERIVS…DLAALFKSLM (66 aa)) are small ATPAse domain (RuvB-S). Residues 236–307 (KNGLQSIDVQ…RTGRNYLTSC (72 aa)) are head domain (RuvB-H). DNA is bound by residues lysine 289 and arginine 294.

It belongs to the RuvB family. Homohexamer. Forms an RuvA(8)-RuvB(12)-Holliday junction (HJ) complex. HJ DNA is sandwiched between 2 RuvA tetramers; dsDNA enters through RuvA and exits via RuvB. An RuvB hexamer assembles on each DNA strand where it exits the tetramer. Each RuvB hexamer is contacted by two RuvA subunits (via domain III) on 2 adjacent RuvB subunits; this complex drives branch migration. In the full resolvosome a probable DNA-RuvA(4)-RuvB(12)-RuvC(2) complex forms which resolves the HJ.

The protein localises to the cytoplasm. The catalysed reaction is ATP + H2O = ADP + phosphate + H(+). Functionally, the RuvA-RuvB-RuvC complex processes Holliday junction (HJ) DNA during genetic recombination and DNA repair, while the RuvA-RuvB complex plays an important role in the rescue of blocked DNA replication forks via replication fork reversal (RFR). RuvA specifically binds to HJ cruciform DNA, conferring on it an open structure. The RuvB hexamer acts as an ATP-dependent pump, pulling dsDNA into and through the RuvAB complex. RuvB forms 2 homohexamers on either side of HJ DNA bound by 1 or 2 RuvA tetramers; 4 subunits per hexamer contact DNA at a time. Coordinated motions by a converter formed by DNA-disengaged RuvB subunits stimulates ATP hydrolysis and nucleotide exchange. Immobilization of the converter enables RuvB to convert the ATP-contained energy into a lever motion, pulling 2 nucleotides of DNA out of the RuvA tetramer per ATP hydrolyzed, thus driving DNA branch migration. The RuvB motors rotate together with the DNA substrate, which together with the progressing nucleotide cycle form the mechanistic basis for DNA recombination by continuous HJ branch migration. Branch migration allows RuvC to scan DNA until it finds its consensus sequence, where it cleaves and resolves cruciform DNA. The sequence is that of Holliday junction branch migration complex subunit RuvB from Mycoplasma pneumoniae (strain ATCC 29342 / M129 / Subtype 1) (Mycoplasmoides pneumoniae).